Consider the following 338-residue polypeptide: E3 ubiquitin-protein ligase SPL1 (338 aa).

A helical membrane pass occupies residues 1–21 (MIHLAGFTCCLGGVALYLLTR). The Chloroplast intermembrane portion of the chain corresponds to 22–223 (STGRDIKSIT…KLGDLSRRFK (202 aa)). The chain crosses the membrane as a helical span at residues 224–246 (YASMGLTVLGVILISKPVIEYIL). Topologically, residues 247 to 338 (KRIEDTLERR…IQQVLKIYRH (92 aa)) are cytoplasmic. An RING-type zinc finger spans residues 291–326 (CVVCLDQKYNTAFVECGHMCCCTPCSLQLRTCPLCR).

It localises to the plastid. The protein localises to the chloroplast outer membrane. It catalyses the reaction S-ubiquitinyl-[E2 ubiquitin-conjugating enzyme]-L-cysteine + [acceptor protein]-L-lysine = [E2 ubiquitin-conjugating enzyme]-L-cysteine + N(6)-ubiquitinyl-[acceptor protein]-L-lysine.. The protein operates within protein modification; protein ubiquitination. Possesses E3 ubiquitin-protein ligase activity. In Arabidopsis thaliana (Mouse-ear cress), this protein is E3 ubiquitin-protein ligase SPL1.